A 138-amino-acid polypeptide reads, in one-letter code: Small ribosomal subunit protein uS8 (138 aa).

The protein belongs to the universal ribosomal protein uS8 family. In terms of assembly, part of the 30S ribosomal subunit. Contacts proteins S5 and S12.

Its function is as follows. One of the primary rRNA binding proteins, it binds directly to 16S rRNA central domain where it helps coordinate assembly of the platform of the 30S subunit. This is Small ribosomal subunit protein uS8 (rpsH) from Thermus thermophilus (strain ATCC BAA-163 / DSM 7039 / HB27).